The sequence spans 718 residues: Putative aminodeoxychorismate synthase (718 aa).

Positions 9–203 constitute a Glutamine amidotransferase type-1 domain; it reads QILLIDCYDS…LSLADTPNIQ (195 aa). Cysteine 88 (nucleophile) is an active-site residue. Active-site residues include histidine 177 and glutamate 179. Residues 266–718 form a PABB component region; it reads FLDSAKKPGR…NLKNKKRSCK (453 aa).

The protein in the C-terminal section; belongs to the anthranilate synthase component I family.

It localises to the cytoplasm. It is found in the nucleus. It catalyses the reaction chorismate + L-glutamine = 4-amino-4-deoxychorismate + L-glutamate. Its pathway is cofactor biosynthesis; tetrahydrofolate biosynthesis; 4-aminobenzoate from chorismate: step 1/2. Its function is as follows. Catalyzes the biosynthesis of 4-amino-4-deoxychorismate (ADC) from chorismate and glutamine. Required for the synthesis of 4-aminobenzoate (PABA), an important component in tetrahydrofolate biosynthesis. The polypeptide is Putative aminodeoxychorismate synthase (Schizosaccharomyces pombe (strain 972 / ATCC 24843) (Fission yeast)).